The following is a 223-amino-acid chain: Killer cell lectin-like receptor subfamily B member 1B allele B (223 aa).

Topologically, residues 1 to 45 are cytoplasmic; the sequence is MDTAVVYADLHLARTGEPKHKSPPSLSPDTCQCPRWHRLALKLGC. The short motif at 5 to 10 is the ITIM motif element; it reads VVYADL. The LCK-binding motif motif lies at 31 to 34; that stretch reads CQCP. The helical; Signal-anchor for type II membrane protein transmembrane segment at 46-66 threads the bilayer; the sequence is ACLILLVLSVIGLGVLVLTLL. Topologically, residues 67–223 are extracellular; that stretch reads QKPLIQNSPA…LKCECMCNGS (157 aa). The region spanning 101 to 211 is the C-type lectin domain; it reads HQDKCFHVSQ…CDSDNLWICQ (111 aa). 2 disulfide bridges follow: cysteine 122–cysteine 210 and cysteine 189–cysteine 202.

As to quaternary structure, homodimer; disulfide-linked. Interacts with tyrosine kinase LCK. Binds PTPN6/SHP-1 in a phosphorylation-dependent manner. As to expression, expressed in a subset of natural killer cells.

It localises to the membrane. Its function is as follows. Receptor for CLEC2D/OCIL. Ligand-binding contributes to inhibition of cytotoxic natural killer (NK) cells. May mediate MHC class I-independent 'missing-self' recognition of allografts, tumor cells and virus-infected cells. In Rattus norvegicus (Rat), this protein is Killer cell lectin-like receptor subfamily B member 1B allele B.